The chain runs to 550 residues: Membrane protein insertase YidC (550 aa).

Residues 3–23 (IKRTVLWVIFFMSAVMLFDNW) form a helical membrane-spanning segment. The disordered stretch occupies residues 34–73 (FPSATQTKTAAPAAPGSSTTASQPTDLPQTTAAAPGSTTP). Low complexity predominate over residues 35–73 (PSATQTKTAAPAAPGSSTTASQPTDLPQTTAAAPGSTTP). 4 helical membrane passes run 363–383 (WGWAIVLLTLLIKAVFFPLSA), 429–449 (FGGCLPVVIQIPVFISLYWVL), 472–492 (PYFILPVLMAVSMFVQTKLNP), and 503–523 (MMFMPIAFSVMFFFFPAGLVL).

This sequence belongs to the OXA1/ALB3/YidC family. Type 1 subfamily. Interacts with the Sec translocase complex via SecD. Specifically interacts with transmembrane segments of nascent integral membrane proteins during membrane integration.

It is found in the cell inner membrane. Its function is as follows. Required for the insertion and/or proper folding and/or complex formation of integral membrane proteins into the membrane. Involved in integration of membrane proteins that insert both dependently and independently of the Sec translocase complex, as well as at least some lipoproteins. Aids folding of multispanning membrane proteins. This chain is Membrane protein insertase YidC, found in Paraburkholderia phymatum (strain DSM 17167 / CIP 108236 / LMG 21445 / STM815) (Burkholderia phymatum).